The primary structure comprises 113 residues: UPF0060 membrane protein Mmcs_2513 (113 aa).

The next 4 helical transmembrane spans lie at 12–32 (ALFV…WQGV), 37–57 (GWIW…VAAF), 66–86 (ILAA…VVVD), and 92–112 (RWDL…MYAP).

The protein belongs to the UPF0060 family.

It localises to the cell membrane. This Mycobacterium sp. (strain MCS) protein is UPF0060 membrane protein Mmcs_2513.